The chain runs to 389 residues: MKLPALLTLGVAASTMVLAAIAPDQVPLNDAKKDELPEKFLIELAPGDTRWVTEDEKWELKREGLKFFDITAEVEQGFLPKVFPTPAVVNFPSELNRTAEVKQLASQLSKENMFNHLTNFTSFHTRYYKSTAGTQSATWLFEQVQQTVNNSLAVKYGAKVETFNHSWSQFSIIASIPGRTNKTVVVGAHQDSINMYLPTIMAAPGADDDGSGTVTILEALRVLLQSDAVAQGNATNTIEFHWYSAEEAGLLGSQAVFSKYKNENRDIKSMLQQDMTGYSQGTLDAGEQESVGVITDYVHSGLTEFIMKVVTGYCDIPFVLTKCGYACSDHASASRYGYPSAFVIESKFEHSSQRIHTMWDTVEYLDFDHMLQHAKMTLGLVYELAFAEL.

Residues 1-19 form the signal peptide; that stretch reads MKLPALLTLGVAASTMVLA. Positions 20 to 88 are excised as a propeptide; sequence AIAPDQVPLN…LPKVFPTPAV (69 aa). 5 N-linked (GlcNAc...) asparagine glycosylation sites follow: asparagine 96, asparagine 119, asparagine 149, asparagine 164, and asparagine 181. Histidine 189 and aspartate 208 together coordinate Zn(2+). Residue asparagine 233 is glycosylated (N-linked (GlcNAc...) asparagine). Residues glutamate 247 and aspartate 274 each contribute to the Zn(2+) site. Cysteines 323 and 327 form a disulfide. Histidine 356 serves as a coordination point for Zn(2+).

It belongs to the peptidase M28 family. M28E subfamily. As to quaternary structure, monomer. Requires Zn(2+) as cofactor.

The protein localises to the secreted. In terms of biological role, extracellular aminopeptidase that allows assimilation of proteinaceous substrates. This chain is Leucine aminopeptidase 1 (LAP1), found in Paracoccidioides brasiliensis (strain Pb18).